Here is a 426-residue protein sequence, read N- to C-terminus: MGQTITEKIFSEHAGKKVYAGEIVRSPIDMVIGNDITTPISIRAFEEGGFEKLANPDGFAIVLDHFIPAKDIASANQAKISRDFALKHNLKNFFDEKDMGIEHALLPEKGLVIPGDVIIGADSHTCTHGALGAFSTGMGSTDISFGMITGGNWFKVPESIKVIFKGKPAPFVTGKDLILEIIRILGVDGALYKALEFTGDTIQYLSMDDRFSLCNMAIEAGAKNGIVAYDEITKEFLDKVGEANGGLRAEPKIHYSDEDANYCQVIEIDVAKLEPVIAYPYLPSNGHSVSQAVSDNIKVDQVFIGSCTNGRLSDFKIAAEILAGQKVARHVRLILTPGTQKILREATKLGYIDTLVDAGAVVSNPTCGACLGGYMGILGDNEVCISTTNRNFVGRMGSRSSKIYLANSAVAAASAISGYITDPRSL.

[4Fe-4S] cluster contacts are provided by Cys-307, Cys-367, and Cys-370.

This sequence belongs to the aconitase/IPM isomerase family. LeuC type 2 subfamily. Heterodimer of LeuC and LeuD. It depends on [4Fe-4S] cluster as a cofactor.

The catalysed reaction is (2R,3S)-3-isopropylmalate = (2S)-2-isopropylmalate. It functions in the pathway amino-acid biosynthesis; L-leucine biosynthesis; L-leucine from 3-methyl-2-oxobutanoate: step 2/4. Catalyzes the isomerization between 2-isopropylmalate and 3-isopropylmalate, via the formation of 2-isopropylmaleate. In Aliarcobacter butzleri (strain RM4018) (Arcobacter butzleri), this protein is 3-isopropylmalate dehydratase large subunit.